The following is a 449-amino-acid chain: GTPase Der (449 aa).

EngA-type G domains lie at 4–174 (PIVA…PPKT) and 183–358 (LRIA…VQRQ). GTP contacts are provided by residues 10 to 17 (GRPNVGKS), 57 to 61 (DTAGV), 126 to 129 (NKCD), 189 to 196 (GRPNVGKS), 236 to 240 (DTAGI), and 301 to 304 (NKWD). In terms of domain architecture, KH-like spans 359 to 444 (KRVPTSELNN…PIVIVFRSRE (86 aa)).

This sequence belongs to the TRAFAC class TrmE-Era-EngA-EngB-Septin-like GTPase superfamily. EngA (Der) GTPase family. As to quaternary structure, associates with the 50S ribosomal subunit.

In terms of biological role, GTPase that plays an essential role in the late steps of ribosome biogenesis. The sequence is that of GTPase Der from Chloroflexus aurantiacus (strain ATCC 29366 / DSM 635 / J-10-fl).